We begin with the raw amino-acid sequence, 365 residues long: tRNA 2-selenouridine synthase (365 aa).

The Rhodanese domain maps to 15–138 (LVSDHPIMDA…MRQFLIETID (124 aa)). Cys-98 acts as the S-selanylcysteine intermediate in catalysis.

It belongs to the SelU family. In terms of assembly, monomer.

It carries out the reaction 5-methylaminomethyl-2-thiouridine(34) in tRNA + selenophosphate + (2E)-geranyl diphosphate + H2O + H(+) = 5-methylaminomethyl-2-selenouridine(34) in tRNA + (2E)-thiogeraniol + phosphate + diphosphate. The enzyme catalyses 5-methylaminomethyl-2-thiouridine(34) in tRNA + (2E)-geranyl diphosphate = 5-methylaminomethyl-S-(2E)-geranyl-thiouridine(34) in tRNA + diphosphate. It catalyses the reaction 5-methylaminomethyl-S-(2E)-geranyl-thiouridine(34) in tRNA + selenophosphate + H(+) = 5-methylaminomethyl-2-(Se-phospho)selenouridine(34) in tRNA + (2E)-thiogeraniol. The catalysed reaction is 5-methylaminomethyl-2-(Se-phospho)selenouridine(34) in tRNA + H2O = 5-methylaminomethyl-2-selenouridine(34) in tRNA + phosphate. Involved in the post-transcriptional modification of the uridine at the wobble position (U34) of tRNA(Lys), tRNA(Glu) and tRNA(Gln). Catalyzes the conversion of 2-thiouridine (S2U-RNA) to 2-selenouridine (Se2U-RNA). Acts in a two-step process involving geranylation of 2-thiouridine (S2U) to S-geranyl-2-thiouridine (geS2U) and subsequent selenation of the latter derivative to 2-selenouridine (Se2U) in the tRNA chain. This is tRNA 2-selenouridine synthase from Shewanella piezotolerans (strain WP3 / JCM 13877).